The sequence spans 427 residues: Zinc-finger homeodomain protein 7 (427 aa).

Disordered stretches follow at residues 1–60 (MEYK…SLMD) and 91–118 (LHAAHHHGQGRRVEAPGGESQHHLQRHH). The span at 10 to 28 (EEEEEEEEEEDDEEEDEEE) shows a compositional bias: acidic residues. Residues 50–60 (SSASSPSSLMD) show a composition bias toward low complexity. The ZF-HD dimerization-type; degenerate zinc-finger motif lies at 163-211 (YRECLKNHAARMGAHVLDGCGEFMSSPGDGAAALACAACGCHRSFHRRE). 2 disordered regions span residues 264-320 (KRPP…SKKR) and 375-427 (HLAK…QHDA). Low complexity-rich tracts occupy residues 271–283 (VSPASAPAALAES) and 301–312 (HAAAVVAASASA). The homeobox DNA-binding region spans 318-381 (KKRFRTKFTA…NNKHLAKTPP (64 aa)). The span at 380–401 (PPSPTSQPPPPPLHHDPSPPPP) shows a compositional bias: pro residues. The segment covering 402 to 416 (PHHHHHHHHHHHPPQ) has biased composition (basic residues). Positions 417-427 (HHQQQQQQHDA) are enriched in low complexity.

In terms of assembly, homo- and heterodimer with other ZFHD proteins.

The protein localises to the nucleus. In terms of biological role, putative transcription factor. This chain is Zinc-finger homeodomain protein 7 (ZHD7), found in Oryza sativa subsp. japonica (Rice).